The following is a 479-amino-acid chain: Poly(A) polymerase catalytic subunit (479 aa).

Active-site residues include Asp202 and Asp204. Ca(2+)-binding residues include Asp202, Asp204, and Asp253.

This sequence belongs to the poxviridae poly(A) polymerase catalytic subunit family. Heterodimer of a large (catalytic) subunit and a small (regulatory) subunit.

The catalysed reaction is RNA(n) + ATP = RNA(n)-3'-adenine ribonucleotide + diphosphate. Polymerase that creates the 3'-poly(A) tail of mRNA's. The polypeptide is Poly(A) polymerase catalytic subunit (OPG063) (Bos taurus (Bovine)).